We begin with the raw amino-acid sequence, 70 residues long: Large ribosomal subunit protein bL31 (70 aa).

K8 carries the N6-acetyllysine modification. The Zn(2+) site is built by C16, C18, C37, and C40.

It belongs to the bacterial ribosomal protein bL31 family. Type A subfamily. In terms of assembly, part of the 50S ribosomal subunit. Zn(2+) is required as a cofactor.

Functionally, binds the 23S rRNA. The polypeptide is Large ribosomal subunit protein bL31 (Escherichia coli O6:K15:H31 (strain 536 / UPEC)).